We begin with the raw amino-acid sequence, 279 residues long: Pantothenate synthetase (279 aa).

An ATP-binding site is contributed by 27 to 34; that stretch reads MGYLHEGH. Histidine 34 (proton donor) is an active-site residue. Glutamine 58 provides a ligand contact to (R)-pantoate. Glutamine 58 contacts beta-alanine. 144 to 147 is a binding site for ATP; sequence GKKD. Glutamine 150 provides a ligand contact to (R)-pantoate. Residues valine 173 and 181 to 184 contribute to the ATP site; that span reads MSSR.

This sequence belongs to the pantothenate synthetase family. Homodimer.

The protein resides in the cytoplasm. It carries out the reaction (R)-pantoate + beta-alanine + ATP = (R)-pantothenate + AMP + diphosphate + H(+). It participates in cofactor biosynthesis; (R)-pantothenate biosynthesis; (R)-pantothenate from (R)-pantoate and beta-alanine: step 1/1. In terms of biological role, catalyzes the condensation of pantoate with beta-alanine in an ATP-dependent reaction via a pantoyl-adenylate intermediate. This Geobacter sp. (strain M21) protein is Pantothenate synthetase.